Reading from the N-terminus, the 140-residue chain is uncharacterized protein (140 aa).

It belongs to the asfivirus D129L family.

This is an uncharacterized protein from African swine fever virus (isolate Pig/Kenya/KEN-50/1950) (ASFV).